The primary structure comprises 178 residues: PEST proteolytic signal-containing nuclear protein (178 aa).

Over residues 1–15 (MADGKAGDEKPEKSQ) the composition is skewed to basic and acidic residues. The interval 1-82 (MADGKAGDEK…FAIGSQTTKK (82 aa)) is disordered. Alanine 2 carries the post-translational modification N-acetylalanine. Residues 37–47 (SSSNGGESSSR) show a composition bias toward low complexity. Serine 53 carries the phosphoserine modification. Lysine 64 bears the N6-acetyllysine mark. Phosphoserine is present on residues serine 77, serine 87, and serine 119. The disordered stretch occupies residues 134–178 (NIGRDTPTSAGPNSFNKGKHGFSDNQKLWERNIKSHLGNVHDQDN). Threonine 139 carries the phosphothreonine modification. Residues 139–149 (TPTSAGPNSFN) are compositionally biased toward polar residues. Serine 147 is modified (phosphoserine). An N6-acetyllysine mark is found at lysine 150 and lysine 152. Basic and acidic residues predominate over residues 160 to 178 (KLWERNIKSHLGNVHDQDN).

In terms of assembly, interacts with UHRF2/NIRF. Ubiquitinated; mediated by UHRF2 and leading to its subsequent proteasomal degradation. In terms of processing, N-terminally acetylated in a HYPK-dependent manner by the NatA acetyltransferase complex which is composed of NAA10 and NAA15.

The protein localises to the nucleus. May be involved in cell cycle regulation. This Homo sapiens (Human) protein is PEST proteolytic signal-containing nuclear protein (PCNP).